The following is a 353-amino-acid chain: Methionine import ATP-binding protein MetN (353 aa).

The ABC transporter domain maps to 11 to 251; sequence ITFDRVEKSF…PEHPTTRSFL (241 aa). Position 48 to 55 (48 to 55) interacts with ATP; it reads GRSGAGKS.

This sequence belongs to the ABC transporter superfamily. Methionine importer (TC 3.A.1.24) family. In terms of assembly, the complex is composed of two ATP-binding proteins (MetN), two transmembrane proteins (MetI) and a solute-binding protein (MetQ).

It is found in the cell inner membrane. The catalysed reaction is L-methionine(out) + ATP + H2O = L-methionine(in) + ADP + phosphate + H(+). The enzyme catalyses D-methionine(out) + ATP + H2O = D-methionine(in) + ADP + phosphate + H(+). Its function is as follows. Part of the ABC transporter complex MetNIQ involved in methionine import. Responsible for energy coupling to the transport system. The polypeptide is Methionine import ATP-binding protein MetN (Cereibacter sphaeroides (strain ATCC 17023 / DSM 158 / JCM 6121 / CCUG 31486 / LMG 2827 / NBRC 12203 / NCIMB 8253 / ATH 2.4.1.) (Rhodobacter sphaeroides)).